A 784-amino-acid polypeptide reads, in one-letter code: Toll-like receptor 2 (784 aa).

The first 20 residues, 1–20, serve as a signal peptide directing secretion; that stretch reads MPRALWTAWVWAVISVFTEG. Residues 21 to 587 are Extracellular-facing; the sequence is ASDQASSLSC…ARLSLSECHR (567 aa). Cys30 and Cys36 are disulfide-bonded. LRR repeat units lie at residues 54–77, 78–101, 102–125, 126–150, 151–175, 176–199, 200–223, 224–250, 251–278, 279–308, 309–337, 338–361, 362–388, 389–414, 415–437, 438–457, 458–478, 479–500, and 501–524; these read VKSL…RCVN, LKTL…HLRN, LEYL…SLYV, LKFL…HLPN, LRTL…GLTF, LEEL…SIQN, ISHL…IVSS, LDYL…INTS, VKKL…YVSG, ILEV…YLGN, VETL…LTGK, VKRV…HLKS, LEYL…AWPV, LQTL…TLKN, LNNL…WPGK, MKQL…CLPQ, TLEI…ILPQ, LKEL…FLPV, and LSVM…SFPQ. N-linked (GlcNAc...) asparagine glycosylation occurs at Asn114. The N-linked (GlcNAc...) asparagine glycan is linked to Asn199. A glycan (N-linked (GlcNAc...) asparagine) is linked at Asn248. A disulfide bridge links Cys353 with Cys382. Cys432 and Cys454 are oxidised to a cystine. Asn442 carries N-linked (GlcNAc...) asparagine glycosylation. In terms of domain architecture, LRRCT spans 525–579; it reads LKALEAGGNNFICSCDFLSFAQGQQALARVLVDWPDGYRCDAPSHVRGQRVQDAR. Residues 588–608 form a helical membrane-spanning segment; the sequence is AAVVSAVCCALFLLLLLTGVL. At 609–784 the chain is on the cytoplasmic side; it reads CHRFHGLWYM…WLNLRAAIRS (176 aa). The TIR domain maps to 639 to 782; it reads LCYDAFVSYS…AFWLNLRAAI (144 aa). Lys754 is covalently cross-linked (Glycyl lysine isopeptide (Lys-Gly) (interchain with G-Cter in ubiquitin)). An ATG16L1-binding motif motif is present at residues 761-778; sequence YLEWPTDETHREAFWLNL.

This sequence belongs to the Toll-like receptor family. As to quaternary structure, interacts with LY96, TLR1 and TLR6 (via extracellular domain). TLR2 seems to exist in heterodimers with either TLR1 or TLR6 before stimulation by the ligand. The heterodimers form bigger oligomers in response to their corresponding ligands as well as further heterotypic associations with other receptors such as CD14 and/or CD36. Binds MYD88 (via TIR domain). Interacts with TICAM1. Interacts with CNPY3. Interacts with ATG16L1. Interacts with PPP1R11. Interacts with TICAM2. Interacts with TIRAP. In terms of processing, ubiquitinated at Lys-754 by PPP1R11, leading to its degradation. Deubiquitinated by USP2. Post-translationally, glycosylation of Asn-442 is critical for secretion of the N-terminal ectodomain of TLR2.

The protein resides in the membrane. It localises to the cytoplasmic vesicle. The protein localises to the phagosome membrane. It is found in the membrane raft. Its function is as follows. Cooperates with LY96 to mediate the innate immune response to bacterial lipoproteins and other microbial cell wall components. Cooperates with TLR1 or TLR6 to mediate the innate immune response to bacterial lipoproteins or lipopeptides. Acts via MYD88 and TRAF6, leading to NF-kappa-B activation, cytokine secretion and the inflammatory response. May also promote apoptosis in response to lipoproteins. Forms activation clusters composed of several receptors depending on the ligand, these clusters trigger signaling from the cell surface and subsequently are targeted to the Golgi in a lipid-raft dependent pathway. Forms the cluster TLR2:TLR6:CD14:CD36 in response to diacylated lipopeptides and TLR2:TLR1:CD14 in response to triacylated lipopeptides. The sequence is that of Toll-like receptor 2 (TLR2) from Ovis aries (Sheep).